Consider the following 980-residue polypeptide: Protein translocase subunit SecA (980 aa).

Residues Gln109, 127-131 (GEGKT), and Asp529 each bind ATP. Residues 954–980 (QKIGRNDPCPCGSGKKYKHCHGKDNPQ) are disordered. 4 residues coordinate Zn(2+): Cys962, Cys964, Cys973, and His974.

The protein belongs to the SecA family. Monomer and homodimer. Part of the essential Sec protein translocation apparatus which comprises SecA, SecYEG and auxiliary proteins SecDF. Other proteins may also be involved. Zn(2+) is required as a cofactor.

It is found in the cell inner membrane. Its subcellular location is the cytoplasm. It catalyses the reaction ATP + H2O + cellular proteinSide 1 = ADP + phosphate + cellular proteinSide 2.. Part of the Sec protein translocase complex. Interacts with the SecYEG preprotein conducting channel. Has a central role in coupling the hydrolysis of ATP to the transfer of proteins into and across the cell membrane, serving as an ATP-driven molecular motor driving the stepwise translocation of polypeptide chains across the membrane. This chain is Protein translocase subunit SecA, found in Brachyspira hyodysenteriae (strain ATCC 49526 / WA1).